The sequence spans 307 residues: Nucleotide-binding protein ACP_0619 (307 aa).

The segment covering 1–14 (MPAPEPTRRAKKDA) has biased composition (basic and acidic residues). The interval 1-23 (MPAPEPTRRAKKDASASPSPAHP) is disordered. ATP is bound at residue 33-40 (GLSGAGKG). 83–86 (DVRE) contacts GTP.

The protein belongs to the RapZ-like family.

Functionally, displays ATPase and GTPase activities. The chain is Nucleotide-binding protein ACP_0619 from Acidobacterium capsulatum (strain ATCC 51196 / DSM 11244 / BCRC 80197 / JCM 7670 / NBRC 15755 / NCIMB 13165 / 161).